Here is a 494-residue protein sequence, read N- to C-terminus: Neuronal acetylcholine receptor subunit alpha-6 (494 aa).

The N-terminal stretch at 1-25 is a signal peptide; the sequence is MLTSKGQGFLHGGLCLWLCVFTPFF. Topologically, residues 26–239 are extracellular; that stretch reads KGCVGCATEE…ITYSFYIRRL (214 aa). N-linked (GlcNAc...) asparagine glycans are attached at residues Asn-54 and Asn-171. 2 cysteine pairs are disulfide-bonded: Cys-158/Cys-172 and Cys-222/Cys-223. 3 helical membrane passes run 240–264, 272–290, and 306–327; these read PMFY…VFYL, VTLC…LVIT, and YLLF…VLNI. Over 328-465 the chain is Cytoplasmic; that stretch reads HYRTPTTHTM…WKYVAMVVDR (138 aa). Ser-401 carries the phosphoserine modification. A helical membrane pass occupies residues 466-484; the sequence is VFLWVFIIVCVFGTAGLFL.

Belongs to the ligand-gated ion channel (TC 1.A.9) family. Acetylcholine receptor (TC 1.A.9.1) subfamily. Alpha-6/CHRNA6 sub-subfamily. Neuronal AChR is composed of two different types of subunits: alpha and non-alpha (beta). CHRNA6/alpha-6 subunit can be combined to CHRNB2/beta-2, CHRNA4/alpha-4 and CHRNB3/beta-3 to give rise to functional receptors. Heteropentamers containing CHRNB3 have an stoichiometry of (CHRNA6:CHRNB2)2:CHRNB3. Interacts with LYPD6.

Its subcellular location is the synaptic cell membrane. The catalysed reaction is Ca(2+)(in) = Ca(2+)(out). It carries out the reaction K(+)(in) = K(+)(out). The enzyme catalyses Na(+)(in) = Na(+)(out). Activated by a myriad of ligands such as acetylcholine, cytisine and nicotine. CHRNA6 nAChR activity is inhibited by the antagonists alpha-conotoxin MII and PIA, a small disulfide-constrained peptides from cone snails. In terms of biological role, component of neuronal acetylcholine receptors (nAChRs) that function as pentameric, ligand-gated cation channels with high calcium permeability among other activities. nAChRs are excitatory neurotrasnmitter receptors formed by a collection of nAChR subunits known to mediate synaptic transmission in the nervous system and the neuromuscular junction. Each nAchR subunit confers differential attributes to channel properties, including activation, deactivation and desensitization kinetics, pH sensitivity, cation permeability, and binding to allosteric modulators. CHRNA6 forms pentameric channels with CHRNB2, CHRNB3 and CHRNA4 that exhibit high sensitivity to ACh and nicotine and are predominantly expressed in only a few brain areas, including dopaminergic neurons, norepirephrine neurons and cells of the visual system. nAChrs containing CHRNA6 subunits mediate endogenous cholinergic modulation of dopamine and gamma-aminobutyric acid (GABA) release in response to nicotine at nerve terminals. The protein is Neuronal acetylcholine receptor subunit alpha-6 of Homo sapiens (Human).